Consider the following 405-residue polypeptide: Arginine biosynthesis bifunctional protein ArgJ (405 aa).

Substrate is bound by residues Thr-152, Lys-178, Thr-189, Glu-276, Asn-400, and Thr-405. The active-site Nucleophile is Thr-189.

This sequence belongs to the ArgJ family. As to quaternary structure, heterotetramer of two alpha and two beta chains.

It is found in the cytoplasm. The catalysed reaction is N(2)-acetyl-L-ornithine + L-glutamate = N-acetyl-L-glutamate + L-ornithine. It catalyses the reaction L-glutamate + acetyl-CoA = N-acetyl-L-glutamate + CoA + H(+). It participates in amino-acid biosynthesis; L-arginine biosynthesis; L-ornithine and N-acetyl-L-glutamate from L-glutamate and N(2)-acetyl-L-ornithine (cyclic): step 1/1. Its pathway is amino-acid biosynthesis; L-arginine biosynthesis; N(2)-acetyl-L-ornithine from L-glutamate: step 1/4. Catalyzes two activities which are involved in the cyclic version of arginine biosynthesis: the synthesis of N-acetylglutamate from glutamate and acetyl-CoA as the acetyl donor, and of ornithine by transacetylation between N(2)-acetylornithine and glutamate. The protein is Arginine biosynthesis bifunctional protein ArgJ of Pseudomonas syringae pv. tomato (strain ATCC BAA-871 / DC3000).